The primary structure comprises 90 residues: Conotoxin TxMMSK-06 (90 aa).

An N-terminal signal peptide occupies residues 1–22 (MMSKLGVLLTICLLLFPHTAVP). Positions 23–74 (LDGDQHADQPAERLQDDISSEHHPMLNSIRRREQNQFMSFTSVKLRDSRGER) are excised as a propeptide. Positions 24-43 (DGDQHADQPAERLQDDISSE) are disordered. Positions 25 to 43 (GDQHADQPAERLQDDISSE) are enriched in basic and acidic residues. 3 disulfides stabilise this stretch: Cys-75–Cys-89, Cys-76–Cys-85, and Cys-81–Cys-88. Position 87 is a 4-hydroxyproline (Pro-87). A Cysteine amide modification is found at Cys-89.

Belongs to the conotoxin M superfamily. As to expression, expressed by the venom duct.

It is found in the secreted. The chain is Conotoxin TxMMSK-06 from Conus textile (Cloth-of-gold cone).